A 73-amino-acid chain; its full sequence is Small ribosomal subunit protein bS18 (73 aa).

The protein belongs to the bacterial ribosomal protein bS18 family. In terms of assembly, part of the 30S ribosomal subunit. Forms a tight heterodimer with protein bS6.

Functionally, binds as a heterodimer with protein bS6 to the central domain of the 16S rRNA, where it helps stabilize the platform of the 30S subunit. This chain is Small ribosomal subunit protein bS18, found in Synechococcus sp. (strain RCC307).